We begin with the raw amino-acid sequence, 374 residues long: Chaperone protein DnaJ (374 aa).

The J domain occupies 5 to 70; the sequence is DYYEILEIER…GKRQLYDRYG (66 aa). The CR-type zinc-finger motif lies at 136-213; it reads GCKKEIKIRY…CNGKGHENKE (78 aa). Zn(2+) contacts are provided by Cys149, Cys152, Cys165, Cys168, Cys187, Cys190, Cys201, and Cys204. 4 CXXCXGXG motif repeats span residues 149 to 156, 165 to 172, 187 to 194, and 201 to 208; these read CPDCKGTG, CPDCGGRG, CPKCGGSG, and CPKCNGKG.

It belongs to the DnaJ family. As to quaternary structure, homodimer. Zn(2+) is required as a cofactor.

It is found in the cytoplasm. Functionally, participates actively in the response to hyperosmotic and heat shock by preventing the aggregation of stress-denatured proteins and by disaggregating proteins, also in an autonomous, DnaK-independent fashion. Unfolded proteins bind initially to DnaJ; upon interaction with the DnaJ-bound protein, DnaK hydrolyzes its bound ATP, resulting in the formation of a stable complex. GrpE releases ADP from DnaK; ATP binding to DnaK triggers the release of the substrate protein, thus completing the reaction cycle. Several rounds of ATP-dependent interactions between DnaJ, DnaK and GrpE are required for fully efficient folding. Also involved, together with DnaK and GrpE, in the DNA replication of plasmids through activation of initiation proteins. This chain is Chaperone protein DnaJ, found in Wolinella succinogenes (strain ATCC 29543 / DSM 1740 / CCUG 13145 / JCM 31913 / LMG 7466 / NCTC 11488 / FDC 602W) (Vibrio succinogenes).